A 600-amino-acid chain; its full sequence is Brain-enriched guanylate kinase-associated protein (600 aa).

M1 is modified (N-acetylmethionine). Y137 is subject to Phosphotyrosine. The segment at 192–222 (PGSLSSRMSDASARDLGYRDGVEKSGPRPPY) is disordered. S200 is modified (phosphoserine). Positions 203–217 (SARDLGYRDGVEKSG) are enriched in basic and acidic residues. Residues S229 and S246 each carry the phosphoserine modification. T249 is modified (phosphothreonine). A Phosphoserine modification is found at S265. The tract at residues 298-317 (SSYSSFSATSEEKEHAQAGT) is disordered. S372 is modified (phosphoserine). R380 bears the Asymmetric dimethylarginine mark. A phosphoserine mark is found at S463, S473, S483, S485, S508, S510, and S514. The interval 537–590 (GAGSSPEPEHGSRESLEPSSMEASPEMHPPTRLSPQQAFPRTGGSGLSRKDSLT) is disordered. Over residues 543–552 (EPEHGSRESL) the composition is skewed to basic and acidic residues. A phosphoserine mark is found at S560 and S570.

As to quaternary structure, interacts with DLG4 and DLGAP1 and forms a ternary complex.

Its subcellular location is the cytoplasm. It is found in the membrane. Its function is as follows. May sustain the structure of the postsynaptic density (PSD). This chain is Brain-enriched guanylate kinase-associated protein (Begain), found in Mus musculus (Mouse).